Reading from the N-terminus, the 579-residue chain is Acyl-coenzyme A synthetase ACSM5, mitochondrial (579 aa).

The transit peptide at 1 to 26 directs the protein to the mitochondrion; sequence MRPWLRHLVLQALRNSRAFCGSHGKP. K97 is subject to N6-acetyllysine; alternate. Residue K97 is modified to N6-succinyllysine; alternate. Residue K152 is modified to N6-acetyllysine. 230–238 provides a ligand contact to ATP; it reads TSGTTGAPK. K303 is modified (N6-acetyllysine; alternate). Residue K303 is modified to N6-succinyllysine; alternate. ATP-binding positions include 368-373, D455, R470, and K566; that span reads EGYGQS.

The protein belongs to the ATP-dependent AMP-binding enzyme family. Mg(2+) serves as cofactor. It depends on Mn(2+) as a cofactor. Detected in kidney and liver.

The protein localises to the mitochondrion matrix. It catalyses the reaction a medium-chain fatty acid + ATP + CoA = a medium-chain fatty acyl-CoA + AMP + diphosphate. Catalyzes the activation of fatty acids by CoA to produce an acyl-CoA, the first step in fatty acid metabolism. This Homo sapiens (Human) protein is Acyl-coenzyme A synthetase ACSM5, mitochondrial (ACSM5).